A 144-amino-acid polypeptide reads, in one-letter code: Large ribosomal subunit protein uL13 (144 aa).

It belongs to the universal ribosomal protein uL13 family. As to quaternary structure, part of the 50S ribosomal subunit.

Its function is as follows. This protein is one of the early assembly proteins of the 50S ribosomal subunit, although it is not seen to bind rRNA by itself. It is important during the early stages of 50S assembly. The chain is Large ribosomal subunit protein uL13 from Natronomonas pharaonis (strain ATCC 35678 / DSM 2160 / CIP 103997 / JCM 8858 / NBRC 14720 / NCIMB 2260 / Gabara) (Halobacterium pharaonis).